A 156-amino-acid chain; its full sequence is MNPPIARQLNLDETKLPAEIFERLSRRGATLKDYRRRREEAIENFGKPGRDPAELGSVMTTIAGNGVWAANMKLAQLRNHWDQVVGQAIASHSAVADFTDGVLTIRAESTVWATQLTYLIPQLTDTIRRNLKGLTITEIRVTGPAAGYTRKWARRR.

Belongs to the UPF0232 family.

The polypeptide is UPF0232 protein BL0636 (Bifidobacterium longum (strain NCC 2705)).